The following is a 537-amino-acid chain: Nedd4 binding protein 3 (537 aa).

Serine 172 carries the phosphoserine modification. Disordered stretches follow at residues leucine 173–cysteine 234, arginine 327–alanine 359, and leucine 422–glutamate 456. The span at proline 178–glycine 207 shows a compositional bias: low complexity. Positions valine 295–glutamate 523 form a coiled coil.

Belongs to the N4BP3 family. As to quaternary structure, binds NEDD4. Interacts with 14-3-3 proteins. Interacts with MAVS.

It localises to the cytoplasmic vesicle. The protein resides in the cell projection. It is found in the axon. The protein localises to the dendrite. Plays a positive role in the antiviral innate immune signaling pathway. Mechanistically, interacts with MAVS and functions as a positive regulator to promote 'Lys-63'-linked polyubiquitination of MAVS and thus strengthens the interaction between MAVS and TRAF2. Also plays a role in axon and dendrite arborization during cranial nerve development. May also be important for neural crest migration and early development of other anterior structures including eye, brain and cranial cartilage. This chain is Nedd4 binding protein 3, found in Rattus norvegicus (Rat).